The sequence spans 393 residues: Branched-chain-amino-acid aminotransferase, mitochondrial (393 aa).

The transit peptide at 1–27 directs the protein to the mitochondrion; sequence MAAATLGQVWARKLLPVPWLLCGSKRC. Position 169 (Tyr169) interacts with substrate. Lys230 carries the N6-(pyridoxal phosphate)lysine modification. N6-acetyllysine is present on Lys322.

Belongs to the class-IV pyridoxal-phosphate-dependent aminotransferase family. Homodimer. The cofactor is pyridoxal 5'-phosphate.

The protein localises to the mitochondrion. The enzyme catalyses L-leucine + 2-oxoglutarate = 4-methyl-2-oxopentanoate + L-glutamate. It catalyses the reaction L-isoleucine + 2-oxoglutarate = (S)-3-methyl-2-oxopentanoate + L-glutamate. The catalysed reaction is L-valine + 2-oxoglutarate = 3-methyl-2-oxobutanoate + L-glutamate. In terms of biological role, catalyzes the first reaction in the catabolism of the essential branched chain amino acids leucine, isoleucine, and valine. May also function as a transporter of branched chain alpha-keto acids. The polypeptide is Branched-chain-amino-acid aminotransferase, mitochondrial (Bcat2) (Mus musculus (Mouse)).